A 692-amino-acid polypeptide reads, in one-letter code: Translation initiation factor IF-2 (692 aa).

One can recognise a tr-type G domain in the interval Pro-194–Lys-363. Positions Gly-203–Thr-210 are G1. Gly-203 to Thr-210 lines the GTP pocket. Positions Gly-228 to His-232 are G2. The tract at residues Asp-249 to Gly-252 is G3. Residues Asp-249–His-253 and Asn-303–Asp-306 contribute to the GTP site. Residues Asn-303–Asp-306 form a G4 region. The interval Ser-339–Lys-341 is G5.

The protein belongs to the TRAFAC class translation factor GTPase superfamily. Classic translation factor GTPase family. IF-2 subfamily.

Its subcellular location is the cytoplasm. Its function is as follows. One of the essential components for the initiation of protein synthesis. Protects formylmethionyl-tRNA from spontaneous hydrolysis and promotes its binding to the 30S ribosomal subunits. Also involved in the hydrolysis of GTP during the formation of the 70S ribosomal complex. The polypeptide is Translation initiation factor IF-2 (Thermoanaerobacter sp. (strain X514)).